The primary structure comprises 842 residues: Elongation factor 2 (842 aa).

Positions 17–346 (TNVRNMSVIA…MIVLHLPSPV (330 aa)) constitute a tr-type G domain. Residues 26 to 33 (AHVDHGKS), 158 to 161 (NKVD), and 213 to 215 (SGL) each bind GTP. An N6,N6,N6-trimethyllysine; by EFM3; alternate modification is found at Lys-509. Lys-509 is subject to N6,N6-dimethyllysine; by EFM3; alternate. Position 509 is an N6-methyllysine; by EFM3; alternate (Lys-509). Residue Ser-579 is modified to Phosphoserine. At Lys-613 the chain carries N6,N6-dimethyllysine; by EFM2; alternate. Lys-613 bears the N6-methyllysine; by EFM2; alternate mark. At His-699 the chain carries Diphthamide. Phosphothreonine is present on residues Thr-713 and Thr-763. Lys-841 participates in a covalent cross-link: Glycyl lysine isopeptide (Lys-Gly) (interchain with G-Cter in ubiquitin).

Belongs to the TRAFAC class translation factor GTPase superfamily. Classic translation factor GTPase family. EF-G/EF-2 subfamily. In terms of assembly, binds to 80S ribosomes. Actively translating ribosomes show mutually exclusive binding of eIF5a (HYP2 or ANB1) and EFT1/eEF2. Interacts with the 40S ribosomal subunit protein RPL9A; the interaction is direct. Interacts with the 60S ribosomal subunit proteins RPL12A; the interaction is direct. Interacts with RPS23A; the interaction is direct. Interacts with 18S rRNA; the interaction is direct. Interacts with 25S rRNA; the interaction is direct. Interacts with RPL0. Interacts with STM1; promoting ribosome inactivation. (Microbial infection) Diphthamide can be ADP-ribosylated by diphtheria toxin and by Pseudomonas exotoxin A, thus abolishing its function.

It localises to the cytoplasm. It carries out the reaction GTP + H2O = GDP + phosphate + H(+). Its pathway is protein biosynthesis; polypeptide chain elongation. Its activity is regulated as follows. Inhibited by fusidic acid and sordarin, which prevent the release of eEF2 from the ribosome after the translocation step. While fusidic acid acts on all eukaryotic eEF2, sordarin specifically binds and inhibits only selected fungal eEF2. In terms of biological role, catalyzes the GTP-dependent ribosomal translocation step during translation elongation. During this step, the ribosome changes from the pre-translocational (PRE) to the post-translocational (POST) state as the newly formed A-site-bound peptidyl-tRNA and P-site-bound deacylated tRNA move to the P and E sites, respectively. Catalyzes the coordinated movement of the two tRNA molecules, the mRNA and conformational changes in the ribosome. The chain is Elongation factor 2 (EFT1) from Saccharomyces cerevisiae (strain ATCC 204508 / S288c) (Baker's yeast).